Consider the following 177-residue polypeptide: Translation initiation factor IF-3 (177 aa).

The protein belongs to the IF-3 family. Monomer.

It localises to the cytoplasm. Functionally, IF-3 binds to the 30S ribosomal subunit and shifts the equilibrium between 70S ribosomes and their 50S and 30S subunits in favor of the free subunits, thus enhancing the availability of 30S subunits on which protein synthesis initiation begins. The polypeptide is Translation initiation factor IF-3 (Clostridium perfringens (strain 13 / Type A)).